A 360-amino-acid polypeptide reads, in one-letter code: Pyrimidine monooxygenase RutA (360 aa).

FMN-binding positions include 49–50, N115, E124, 140–141, and S190; these read IK and RY.

The protein belongs to the NtaA/SnaA/DszA monooxygenase family. RutA subfamily.

The catalysed reaction is uracil + FMNH2 + NADH + O2 = (Z)-3-ureidoacrylate + FMN + NAD(+) + H2O + H(+). The enzyme catalyses thymine + FMNH2 + NADH + O2 = (Z)-2-methylureidoacrylate + FMN + NAD(+) + H2O + H(+). Functionally, catalyzes the pyrimidine ring opening between N-3 and C-4 by an unusual flavin hydroperoxide-catalyzed mechanism, adding oxygen atoms in the process to yield ureidoacrylate peracid, that immediately reacts with FMN forming ureidoacrylate and FMN-N(5)-oxide. The FMN-N(5)-oxide reacts spontaneously with NADH to produce FMN. Requires the flavin reductase RutF to regenerate FMN in vivo. The chain is Pyrimidine monooxygenase RutA from Stutzerimonas stutzeri (strain A1501) (Pseudomonas stutzeri).